The chain runs to 90 residues: Small ribosomal subunit protein uS15c (90 aa).

The protein belongs to the universal ribosomal protein uS15 family. Part of the 30S ribosomal subunit.

It localises to the plastid. Its subcellular location is the chloroplast. The polypeptide is Small ribosomal subunit protein uS15c (rps15) (Manihot esculenta (Cassava)).